Reading from the N-terminus, the 1041-residue chain is Importin-9 (1041 aa).

Residue alanine 2 is modified to N-acetylalanine. In terms of domain architecture, Importin N-terminal spans 43–119 (AEEQIKVLEV…RELLPNGLRE (77 aa)). Residues 936 to 967 (QATPAEWNQDDSNDMWEDQEEEEEEEEDGLAG) form a disordered region. Over residues 943–964 (NQDDSNDMWEDQEEEEEEEEDG) the composition is skewed to acidic residues.

Belongs to the importin beta family. Interacts with histones H2A, H2B, H3 and H4. The binding is coupled to RanGTP cycles. Interacts with AKIRIN2; promoting association with pre-assembled proteasomes. Associates with pre-assembled proteasomes; interaction is indirect and mediated via interaction with AKIRIN2. Interacts with PPP2R1A and PPP2R1B.

The protein resides in the cytoplasm. The protein localises to the nucleus. Nuclear transport receptor that mediates nuclear import of proteins, such as histones, proteasome and actin. Serves as receptor for nuclear localization signals (NLS) in cargo substrates. Is thought to mediate docking of the importin/substrate complex to the nuclear pore complex (NPC) through binding to nucleoporin and the complex is subsequently translocated through the pore by an energy requiring, Ran-dependent mechanism. At the nucleoplasmic side of the NPC, Ran binds to the importin, the importin/substrate complex dissociates and importin is re-exported from the nucleus to the cytoplasm where GTP hydrolysis releases Ran. The directionality of nuclear import is thought to be conferred by an asymmetric distribution of the GTP- and GDP-bound forms of Ran between the cytoplasm and nucleus. Mediates the import of pre-assembled proteasomes into the nucleus; AKIRIN2 acts as a molecular bridge between IPO9 and the proteasome complex. Mediates the nuclear import of histones H2A, H2B, H4 and H4. In addition to nuclear import, also acts as a chaperone for histones by preventing inappropriate non-nucleosomal interactions. Mediates the nuclear import of actin. The sequence is that of Importin-9 from Mus musculus (Mouse).